The primary structure comprises 344 residues: S-adenosylmethionine:tRNA ribosyltransferase-isomerase (344 aa).

Belongs to the QueA family. As to quaternary structure, monomer.

It is found in the cytoplasm. The enzyme catalyses 7-aminomethyl-7-carbaguanosine(34) in tRNA + S-adenosyl-L-methionine = epoxyqueuosine(34) in tRNA + adenine + L-methionine + 2 H(+). The protein operates within tRNA modification; tRNA-queuosine biosynthesis. Functionally, transfers and isomerizes the ribose moiety from AdoMet to the 7-aminomethyl group of 7-deazaguanine (preQ1-tRNA) to give epoxyqueuosine (oQ-tRNA). This chain is S-adenosylmethionine:tRNA ribosyltransferase-isomerase, found in Acinetobacter baylyi (strain ATCC 33305 / BD413 / ADP1).